A 206-amino-acid polypeptide reads, in one-letter code: Small ribosomal subunit protein uS4 (206 aa).

Residues 96-156 (CRLDNVVYRM…EKSLGQLRIV (61 aa)) enclose the S4 RNA-binding domain.

This sequence belongs to the universal ribosomal protein uS4 family. In terms of assembly, part of the 30S ribosomal subunit. Contacts protein S5. The interaction surface between S4 and S5 is involved in control of translational fidelity.

One of the primary rRNA binding proteins, it binds directly to 16S rRNA where it nucleates assembly of the body of the 30S subunit. Functionally, with S5 and S12 plays an important role in translational accuracy. This Pseudomonas putida (strain ATCC 47054 / DSM 6125 / CFBP 8728 / NCIMB 11950 / KT2440) protein is Small ribosomal subunit protein uS4.